The sequence spans 240 residues: tRNA (guanine-N(1)-)-methyltransferase (240 aa).

Residues Gly110 and 129-134 (LGDFVL) each bind S-adenosyl-L-methionine.

This sequence belongs to the RNA methyltransferase TrmD family. Homodimer.

It localises to the cytoplasm. It carries out the reaction guanosine(37) in tRNA + S-adenosyl-L-methionine = N(1)-methylguanosine(37) in tRNA + S-adenosyl-L-homocysteine + H(+). Specifically methylates guanosine-37 in various tRNAs. The chain is tRNA (guanine-N(1)-)-methyltransferase from Clostridium botulinum (strain Kyoto / Type A2).